The chain runs to 968 residues: Putative pectinesterase/pectinesterase inhibitor 26 (968 aa).

Residues 33-53 form a helical membrane-spanning segment; that stretch reads IGISVAVLVAIIISSTVTIAI. The segment at 71-230 is pectinesterase inhibitor 26 A; it reads LTPAASLKTV…TEFTSNSLAI (160 aa). Asparagine 101, asparagine 158, asparagine 219, asparagine 295, asparagine 352, asparagine 400, asparagine 464, asparagine 541, asparagine 559, and asparagine 603 each carry an N-linked (GlcNAc...) asparagine glycan. A pectinesterase inhibitor 26 B region spans residues 265 to 430; sequence LTPAASLRNV…RKFTSNSLAI (166 aa). Residues 453-614 form a pectinesterase inhibitor 26 C region; it reads PTPSSVLRTV…TEFTSNSLAI (162 aa). The interval 660-954 is pectinesterase 26; the sequence is HVTVAADGSG…FTVKYFLRGD (295 aa). Threonine 735 contributes to the substrate binding site. Asparagine 737 is a glycosylation site (N-linked (GlcNAc...) asparagine). Residue glutamine 765 participates in substrate binding. Catalysis depends on aspartate 788, which acts as the Proton donor; for pectinesterase activity. Cysteines 802 and 822 form a disulfide. Aspartate 809 (nucleophile; for pectinesterase activity) is an active-site residue. Residue asparagine 863 is glycosylated (N-linked (GlcNAc...) asparagine). Arginine 872 and tryptophan 874 together coordinate substrate. An N-linked (GlcNAc...) asparagine glycan is attached at asparagine 900.

This sequence in the N-terminal section; belongs to the PMEI family. It in the C-terminal section; belongs to the pectinesterase family. Expressed in flowers.

It localises to the membrane. It catalyses the reaction [(1-&gt;4)-alpha-D-galacturonosyl methyl ester](n) + n H2O = [(1-&gt;4)-alpha-D-galacturonosyl](n) + n methanol + n H(+). Its pathway is glycan metabolism; pectin degradation; 2-dehydro-3-deoxy-D-gluconate from pectin: step 1/5. Acts in the modification of cell walls via demethylesterification of cell wall pectin. The protein is Putative pectinesterase/pectinesterase inhibitor 26 (PME26) of Arabidopsis thaliana (Mouse-ear cress).